Here is a 357-residue protein sequence, read N- to C-terminus: Probable leucine aminopeptidase TRV_02148.1 (357 aa).

Positions 1-15 are cleaved as a signal peptide; sequence MKVLAALALSALAMA. An N-linked (GlcNAc...) asparagine glycan is attached at asparagine 76. 2 residues coordinate Zn(2+): histidine 167 and aspartate 185. Positions 169 to 188 are disordered; that stretch reads DSINGKNPQGEAPGADDNGS. The N-linked (GlcNAc...) asparagine glycan is linked to asparagine 186. Residues glutamate 224 and aspartate 251 each coordinate Zn(2+). Asparagine 269 is a glycosylation site (N-linked (GlcNAc...) asparagine). An intrachain disulfide couples cysteine 291 to cysteine 295. Histidine 324 provides a ligand contact to Zn(2+).

This sequence belongs to the peptidase M28 family. M28E subfamily. In terms of assembly, monomer. It depends on Zn(2+) as a cofactor.

Its subcellular location is the secreted. Probable extracellular aminopeptidase which contributes to pathogenicity. The polypeptide is Probable leucine aminopeptidase TRV_02148.1 (Trichophyton verrucosum (strain HKI 0517)).